Here is a 146-residue protein sequence, read N- to C-terminus: Ribonuclease H (146 aa).

One can recognise an RNase H type-1 domain in the interval 4-145; sequence ELNKVVIYTD…ADILARSQIS (142 aa). Residues Asp13, Glu51, Asp73, and Asp137 each contribute to the Mg(2+) site.

Belongs to the RNase H family. In terms of assembly, monomer. Mg(2+) is required as a cofactor.

Its subcellular location is the cytoplasm. It catalyses the reaction Endonucleolytic cleavage to 5'-phosphomonoester.. Functionally, endonuclease that specifically degrades the RNA of RNA-DNA hybrids. In Ehrlichia canis (strain Jake), this protein is Ribonuclease H.